Here is a 461-residue protein sequence, read N- to C-terminus: Ribulose bisphosphate carboxylase (461 aa).

A substrate-binding site is contributed by Asn-112. Residue Lys-167 is the Proton acceptor of the active site. Lys-169 provides a ligand contact to substrate. The Mg(2+) site is built by Lys-192, Asp-194, and Glu-195. An N6-carboxylysine modification is found at Lys-192. His-288 acts as the Proton acceptor in catalysis. Substrate-binding residues include Arg-289, His-322, and Ser-369.

Belongs to the RuBisCO large chain family. Type II subfamily. In terms of assembly, homodimer. Mg(2+) is required as a cofactor.

It catalyses the reaction 2 (2R)-3-phosphoglycerate + 2 H(+) = D-ribulose 1,5-bisphosphate + CO2 + H2O. The enzyme catalyses D-ribulose 1,5-bisphosphate + O2 = 2-phosphoglycolate + (2R)-3-phosphoglycerate + 2 H(+). Functionally, ruBisCO catalyzes two reactions: the carboxylation of D-ribulose 1,5-bisphosphate, the primary event in carbon dioxide fixation, as well as the oxidative fragmentation of the pentose substrate. Both reactions occur simultaneously and in competition at the same active site. In Rhodopseudomonas palustris (strain ATCC BAA-98 / CGA009), this protein is Ribulose bisphosphate carboxylase.